The primary structure comprises 109 residues: U-scoloptoxin(16)-Cw1a (109 aa).

The first 21 residues, 1–21 (MNAVFIVFLSAILSYPHESFA), serve as a signal peptide directing secretion.

The protein belongs to the scoloptoxin-16 family. In terms of processing, contains 4 disulfide bonds. Expressed by the venom gland.

It localises to the secreted. This chain is U-scoloptoxin(16)-Cw1a, found in Cormocephalus westwoodi (Westwood's green centipede).